The sequence spans 237 residues: Ribonuclease PH (237 aa).

Phosphate-binding positions include Arg86 and 124–126 (GTR).

It belongs to the RNase PH family. In terms of assembly, homohexameric ring arranged as a trimer of dimers.

The catalysed reaction is tRNA(n+1) + phosphate = tRNA(n) + a ribonucleoside 5'-diphosphate. Phosphorolytic 3'-5' exoribonuclease that plays an important role in tRNA 3'-end maturation. Removes nucleotide residues following the 3'-CCA terminus of tRNAs; can also add nucleotides to the ends of RNA molecules by using nucleoside diphosphates as substrates, but this may not be physiologically important. Probably plays a role in initiation of 16S rRNA degradation (leading to ribosome degradation) during starvation. This is Ribonuclease PH from Rhodopseudomonas palustris (strain ATCC BAA-98 / CGA009).